Here is a 502-residue protein sequence, read N- to C-terminus: ATP synthase subunit alpha (502 aa).

Residue 169-176 (GDRQTGKT) participates in ATP binding.

The protein belongs to the ATPase alpha/beta chains family. As to quaternary structure, F-type ATPases have 2 components, CF(1) - the catalytic core - and CF(0) - the membrane proton channel. CF(1) has five subunits: alpha(3), beta(3), gamma(1), delta(1), epsilon(1). CF(0) has three main subunits: a(1), b(2) and c(9-12). The alpha and beta chains form an alternating ring which encloses part of the gamma chain. CF(1) is attached to CF(0) by a central stalk formed by the gamma and epsilon chains, while a peripheral stalk is formed by the delta and b chains.

It localises to the cell inner membrane. It carries out the reaction ATP + H2O + 4 H(+)(in) = ADP + phosphate + 5 H(+)(out). Functionally, produces ATP from ADP in the presence of a proton gradient across the membrane. The alpha chain is a regulatory subunit. This is ATP synthase subunit alpha from Geobacter sp. (strain M21).